We begin with the raw amino-acid sequence, 328 residues long: tRNA dimethylallyltransferase (328 aa).

23–30 contacts ATP; it reads GPTASGKS. 25–30 lines the substrate pocket; that stretch reads TASGKS. The interval 48-51 is interaction with substrate tRNA; sequence DSMQ.

Belongs to the IPP transferase family. In terms of assembly, monomer. Mg(2+) is required as a cofactor.

It catalyses the reaction adenosine(37) in tRNA + dimethylallyl diphosphate = N(6)-dimethylallyladenosine(37) in tRNA + diphosphate. In terms of biological role, catalyzes the transfer of a dimethylallyl group onto the adenine at position 37 in tRNAs that read codons beginning with uridine, leading to the formation of N6-(dimethylallyl)adenosine (i(6)A). This chain is tRNA dimethylallyltransferase, found in Rhodopseudomonas palustris (strain BisA53).